Reading from the N-terminus, the 160-residue chain is uncharacterized protein (160 aa).

The chain crosses the membrane as a helical span at residues 27-47; sequence VMNSYFIAGCGPAVCYYAVSW.

Its subcellular location is the membrane. This is an uncharacterized protein from Homo sapiens (Human).